Reading from the N-terminus, the 911-residue chain is Chromatin assembly factor 1 subunit A (911 aa).

Residues 1 to 31 form a binds PCNA region; the sequence is MLEEPEAATRTAAAVDCKDRPGFPVKRLIQA. The interval 166-200 is disordered; that stretch reads HMEEEPGSPGDPKRTGDCQAGSLQSCPELTPGSRT. A binds CBX1 and CBX3 chromo shadow domains region spans residues 176–327; the sequence is DPKRTGDCQA…LHRDREQQRE (152 aa). Polar residues predominate over residues 186–200; it reads GSLQSCPELTPGSRT. Ser-190 and Ser-208 each carry phosphoserine. Positions 217-230 match the PxVxL motif motif; the sequence is FIEKVPVVVLEDIL. Disordered regions lie at residues 250–408 and 578–618; these read SESE…EEEK and DSDD…VPHG. Positions 265-281 are enriched in low complexity; sequence LSHSSTNSSSPTSSPEG. At Ser-293 the chain carries Phosphoserine. Basic and acidic residues predominate over residues 310–408; sequence STEKGRSKLH…EEKRLREEEK (99 aa). Acidic residues-rich tracts occupy residues 578–589 and 597–612; these read DSDDEWEEEEPG and GDED…EDDG. The necessary for homodimerization and competence for chromatin assembly stretch occupies residues 621–657; it reads SEDEGVTEECADPENHKVHQKLKAKEWDELLAKGKRF. Positions 639-911 are binds to p60; it reads HQKLKAKEWD…APIPAPTLCK (273 aa). At Ser-776 the chain carries Phosphoserine. 2 disordered regions span residues 819 to 843 and 866 to 886; these read PSAP…MLLK and GSGD…DDTD. Over residues 827 to 839 the composition is skewed to polar residues; sequence GSASTEGPGQSTP. Thr-838 carries the post-translational modification Phosphothreonine. The span at 876-886 shows a compositional bias: acidic residues; that stretch reads DTEEDEEDDTD.

The protein belongs to the CHAF1A family. In terms of assembly, homodimer. Part of the CAF-1 complex that contains RBBP4, CHAF1B and CHAF1A. CHAF1A binds directly to CHAF1B. Only minor amounts of RBBP4 are complexed with CHAF1A and CHAF1B in G1 phase. Interacts with PCNA; the interaction is direct. Interacts (via the PxVxL motif) with CBX5; the interaction is direct. Interacts with MBD1. Interacts with histones H3.1, H3.2 and H3.1t.

It is found in the nucleus. Acts as a component of the histone chaperone complex chromatin assembly factor 1 (CAF-1), which assembles histone octamers onto DNA during replication and repair. CAF-1 performs the first step of the nucleosome assembly process, bringing newly synthesized histones H3 and H4 to replicating DNA; histones H2A/H2B can bind to this chromatin precursor subsequent to DNA replication to complete the histone octamer. It may play a role in heterochromatin maintenance in proliferating cells by bringing newly synthesized cbx proteins to heterochromatic DNA replication foci. This Mus musculus (Mouse) protein is Chromatin assembly factor 1 subunit A.